The chain runs to 449 residues: Nucleoprotein (449 aa).

Residues M1–S55 form a disordered region. Low complexity predominate over residues S9 to G22. Composition is skewed to polar residues over residues Q29 to T38 and S45 to S55. The interval Q52–S194 is RNA-binding. The 130-residue stretch at P61–G190 folds into the CoV N NTD domain. Residues R106, R122, and R164 each contribute to the RNA site. 3 disordered regions span residues P158–D231, I266–G297, and M387–I449. The residue at position 167 (S167) is a Phosphoserine; by host. Residue T174 is modified to Phosphothreonine; by host. S191 is subject to Phosphoserine; by host. Polar residues-rich tracts occupy residues S194 to A204 and G212 to G227. Residues A259 to E384 enclose the CoV N CTD domain. A compositionally biased stretch (basic residues) spans I266–P276. The interval I266–D385 is dimerization. At S391 the chain carries Phosphoserine; by host. Residues Q400–I410 are compositionally biased toward polar residues. Positions K423–E440 are enriched in basic and acidic residues. S424 carries the post-translational modification Phosphoserine; by host. At T428 the chain carries Phosphothreonine; by host.

It belongs to the betacoronavirus nucleocapsid protein family. In terms of assembly, homooligomer. Both monomeric and oligomeric forms interact with RNA. Interacts with protein M. Interacts with NSP3; this interaction serves to tether the genome to the newly translated replicase-transcriptase complex at a very early stage of infection. In terms of processing, ADP-ribosylated. The ADP-ribosylation is retained in the virion during infection. Phosphorylated on serine and threonine residues.

It localises to the virion. The protein localises to the host endoplasmic reticulum-Golgi intermediate compartment. The protein resides in the host Golgi apparatus. Functionally, packages the positive strand viral genome RNA into a helical ribonucleocapsid (RNP) and plays a fundamental role during virion assembly through its interactions with the viral genome and membrane protein M. Plays an important role in enhancing the efficiency of subgenomic viral RNA transcription as well as viral replication. This is Nucleoprotein from Sus scrofa (Pig).